We begin with the raw amino-acid sequence, 387 residues long: Cysteine desulfurase (387 aa).

Pyridoxal 5'-phosphate-binding positions include 72–73 (GT), Asn152, Gln180, and 200–202 (SAH). Lys203 is subject to N6-(pyridoxal phosphate)lysine. Pyridoxal 5'-phosphate is bound at residue Thr238. Catalysis depends on Cys323, which acts as the Cysteine persulfide intermediate. Cys323 lines the [2Fe-2S] cluster pocket.

This sequence belongs to the class-V pyridoxal-phosphate-dependent aminotransferase family. NifS/IscS subfamily. Homodimer. Requires pyridoxal 5'-phosphate as cofactor.

The enzyme catalyses (sulfur carrier)-H + L-cysteine = (sulfur carrier)-SH + L-alanine. In terms of biological role, catalyzes the removal of elemental sulfur atoms from cysteine to produce alanine. Seems to participate in the biosynthesis of the nitrogenase metalloclusters by providing the inorganic sulfur required for the Fe-S core formation. In Cereibacter sphaeroides (Rhodobacter sphaeroides), this protein is Cysteine desulfurase.